Here is a 199-residue protein sequence, read N- to C-terminus: GTP cyclohydrolase-2 (199 aa).

49-53 (RIHSE) lines the GTP pocket. Positions 54, 65, and 67 each coordinate Zn(2+). GTP-binding positions include Q70, 92–94 (EGR), and T114. D126 acts as the Proton acceptor in catalysis. Residue R128 is the Nucleophile of the active site. Positions 149 and 154 each coordinate GTP.

It belongs to the GTP cyclohydrolase II family. In terms of assembly, homodimer. Requires Zn(2+) as cofactor.

The catalysed reaction is GTP + 4 H2O = 2,5-diamino-6-hydroxy-4-(5-phosphoribosylamino)-pyrimidine + formate + 2 phosphate + 3 H(+). It participates in cofactor biosynthesis; riboflavin biosynthesis; 5-amino-6-(D-ribitylamino)uracil from GTP: step 1/4. Functionally, catalyzes the conversion of GTP to 2,5-diamino-6-ribosylamino-4(3H)-pyrimidinone 5'-phosphate (DARP), formate and pyrophosphate. The chain is GTP cyclohydrolase-2 from Blochmanniella floridana.